A 214-amino-acid chain; its full sequence is DELTA-actitoxin-Aeq1a (214 aa).

The signal sequence occupies residues 1-19; that stretch reads MSRLIIVFIVVTMICSATA. The propeptide occupies 20 to 35; the sequence is LPSKKIIDEDEEDEKR. Positions 38 to 47 are plays an important role in the hemolytic activity; sequence DVAGAVIDGA. The segment at 46-65 is N-terminal region; it reads GASLSFDILKTVLEALGNVK. Serine 89, valine 122, serine 140, proline 142, tyrosine 168, tyrosine 172, and tyrosine 173 together coordinate phosphocholine. The tract at residues 140-155 is trp-rich region, which is important for the binding to lipid membrane; the sequence is SVPYDYNWYSNWWNVR. Residues 179–181 carry the Cell attachment site, crucial for protein stability motif; it reads RGD.

The protein belongs to the actinoporin family. Sea anemone subfamily. In terms of assembly, octamer or nonamer in membranes. Monomer in the soluble state.

Its subcellular location is the secreted. The protein resides in the nematocyst. The protein localises to the target cell membrane. Its function is as follows. Pore-forming protein that forms cations-selective hydrophilic pores of around 1 nm and causes cardiac stimulation and cytolysis. Pore formation is a multi-step process that involves specific recognition of membrane sphingomyelin (but neither cholesterol nor phosphatidylcholine) using aromatic rich region and adjacent phosphocholine (POC) binding site, firm binding to the membrane (mainly driven by hydrophobic interactions) accompanied by the transfer of the N-terminal region to the lipid-water interface and finally pore formation after oligomerization of monomers. Cytolytic effects include red blood cells hemolysis, platelet aggregation and lysis, cytotoxic and cytostatic effects on fibroblasts. Lethality in mammals has been ascribed to severe vasospasm of coronary vessels, cardiac arrhythmia, and inotropic effects. The protein is DELTA-actitoxin-Aeq1a of Actinia equina (Beadlet anemone).